A 162-amino-acid polypeptide reads, in one-letter code: NRR repressor homolog 3 (162 aa).

The interval 1–80 (MDPTMPTPHT…GHEEEARDED (80 aa)) is disordered. A compositionally biased stretch (polar residues) spans 7-24 (TPHTISGTSPFPRNSSTA). Basic residues predominate over residues 37-46 (PRHRRSRKRD). The span at 69–80 (GHGHEEEARDED) shows a compositional bias: basic and acidic residues.

This sequence belongs to the NPR1-interactor family. As to quaternary structure, interacts with NPR1/NH1. Interacts with NPR3/NH3.

Its subcellular location is the nucleus. In terms of biological role, binds to and represses NPR1/NH1-mediated transcriptional activation of LG2 in vitro. This chain is NRR repressor homolog 3, found in Oryza sativa subsp. japonica (Rice).